The following is an 87-amino-acid chain: MANHKSALKRIKQTEKRTERNRHVRSTLRTFIKRVREAVAAKDANLAKEALAAAIPVIDGAASKGVIHSSNASRSVSRLTKLVNTLS.

Basic residues predominate over residues 1 to 11; that stretch reads MANHKSALKRI. Residues 1–23 are disordered; that stretch reads MANHKSALKRIKQTEKRTERNRH.

It belongs to the bacterial ribosomal protein bS20 family.

In terms of biological role, binds directly to 16S ribosomal RNA. In Geotalea daltonii (strain DSM 22248 / JCM 15807 / FRC-32) (Geobacter daltonii), this protein is Small ribosomal subunit protein bS20.